Here is a 462-residue protein sequence, read N- to C-terminus: Gamma-aminobutyric acid receptor subunit alpha-5 (462 aa).

The N-terminal stretch at 1 to 31 (MDNGMFSGFIMIKNLLLFCISMNLSSHFGFS) is a signal peptide. Residues 32–260 (QMPTSSVKDE…FHLKRKIGYF (229 aa)) are Extracellular-facing. Asn-45 carries N-linked (GlcNAc...) asparagine glycosylation. Arg-101 serves as a coordination point for 4-aminobutanoate. Asn-145 is a glycosylation site (N-linked (GlcNAc...) asparagine). Thr-164 is a binding site for 4-aminobutanoate. Cys-173 and Cys-187 are joined by a disulfide. N-linked (GlcNAc...) asparagine glycans are attached at residues Asn-207 and Asn-236. The chain crosses the membrane as a helical span at residues 261 to 281 (VIQTYLPCIMTVILSQVSFWL). Residues 282-286 (NRESV) lie on the Cytoplasmic side of the membrane. Residues 287–308 (PARTVFGVTTVLTMTTLSISAR) form a helical membrane-spanning segment. Residues 309–318 (NSLPKVAYAT) are Extracellular-facing. Residues 319-340 (AMDWFIAVCYAFVFSALIEFAT) form a helical membrane-spanning segment. Over 341 to 427 (VNYFTKRGWA…TYNSISKIDK (87 aa)) the chain is Cytoplasmic. Lys-355 is covalently cross-linked (Glycyl lysine isopeptide (Lys-Gly) (interchain with G-Cter in ubiquitin)). The segment at 377-412 (FTTGKMSHPPNIPKEQTPAGTSNTTSVSVKPSEEKT) is disordered. A helical transmembrane segment spans residues 428–448 (MSRIVFPVLFGTFNLVYWATY). The Extracellular segment spans residues 449–462 (LNREPVIKGAASPK).

This sequence belongs to the ligand-gated ion channel (TC 1.A.9) family. Gamma-aminobutyric acid receptor (TC 1.A.9.5) subfamily. GABRA5 sub-subfamily. As to quaternary structure, heteropentamer, formed by a combination of alpha (GABRA1-6), beta (GABRB1-3), gamma (GABRG1-3), delta (GABRD), epsilon (GABRE), rho (GABRR1-3), pi (GABRP) and theta (GABRQ) chains, each subunit exhibiting distinct physiological and pharmacological properties.

It is found in the postsynaptic cell membrane. It localises to the cell membrane. The catalysed reaction is chloride(in) = chloride(out). Alpha subunit of the heteropentameric ligand-gated chloride channel gated by gamma-aminobutyric acid (GABA), a major inhibitory neurotransmitter in the brain. GABA-gated chloride channels, also named GABA(A) receptors (GABAAR), consist of five subunits arranged around a central pore and contain GABA active binding site(s) located at the alpha and beta subunit interface(s). When activated by GABA, GABAARs selectively allow the flow of chloride anions across the cell membrane down their electrochemical gradient. GABAARs containing alpha-5/GABRA5 subunits are mainly extrasynaptic and contribute to the tonic GABAergic inhibition in the hippocampus. Extrasynaptic alpha-5-containing GABAARs in CA1 pyramidal neurons play a role in learning and memory processes. The protein is Gamma-aminobutyric acid receptor subunit alpha-5 of Homo sapiens (Human).